An 88-amino-acid chain; its full sequence is Small ribosomal subunit protein uS15c (88 aa).

Belongs to the universal ribosomal protein uS15 family. As to quaternary structure, part of the 30S ribosomal subunit.

It localises to the plastid. It is found in the chloroplast. This chain is Small ribosomal subunit protein uS15c (rps15), found in Barbarea verna (Land cress).